A 197-amino-acid polypeptide reads, in one-letter code: Translation initiation factor IF-3 (197 aa).

The protein belongs to the IF-3 family. In terms of assembly, monomer.

Its subcellular location is the cytoplasm. Its function is as follows. IF-3 binds to the 30S ribosomal subunit and shifts the equilibrium between 70S ribosomes and their 50S and 30S subunits in favor of the free subunits, thus enhancing the availability of 30S subunits on which protein synthesis initiation begins. In Prosthecochloris aestuarii (strain DSM 271 / SK 413), this protein is Translation initiation factor IF-3.